We begin with the raw amino-acid sequence, 111 residues long: Cytochrome c oxidase subunit 7A2-like, mitochondrial (111 aa).

The N-terminal 54 residues, 1-54, are a transit peptide targeting the mitochondrion; that stretch reads MYYKFSSFTQKLAGAWASEAYTPQGLKPVSTEAPPIIFATPTKLTSSVTAYDYS. K68 carries the N6-acetyllysine modification. A helical membrane pass occupies residues 79–104; that stretch reads PDQMLYRTTMALTLGGTIYCLIALYM.

Belongs to the cytochrome c oxidase VIIa family.

Its subcellular location is the mitochondrion inner membrane. Functionally, non-functional protein. In contrast to the protein found in other strains (AC Q99KD6), cannot induce the assembly of mitochondrial respiratory supercomplexes. The protein is Cytochrome c oxidase subunit 7A2-like, mitochondrial of Mus musculus (Mouse).